Here is a 101-residue protein sequence, read N- to C-terminus: Large ribosomal subunit protein bL9m (101 aa).

The transit peptide at 1–32 directs the protein to the mitochondrion; sequence MSIMKPTTRFFRFNSLELAVSPFQRIYGQLRF.

Belongs to the bacterial ribosomal protein bL9 family. In terms of assembly, component of the mitochondrial large ribosomal subunit (mt-LSU). Mature yeast 74S mitochondrial ribosomes consist of a small (37S) and a large (54S) subunit. The 37S small subunit contains a 15S ribosomal RNA (15S mt-rRNA) and at least 32 different proteins. The 54S large subunit contains a 21S rRNA (21S mt-rRNA) and at least 45 different proteins.

It localises to the mitochondrion. In terms of biological role, component of the mitochondrial ribosome (mitoribosome), a dedicated translation machinery responsible for the synthesis of mitochondrial genome-encoded proteins, including at least some of the essential transmembrane subunits of the mitochondrial respiratory chain. The mitoribosomes are attached to the mitochondrial inner membrane and translation products are cotranslationally integrated into the membrane. This Schizosaccharomyces pombe (strain 972 / ATCC 24843) (Fission yeast) protein is Large ribosomal subunit protein bL9m.